The following is a 1109-amino-acid chain: Myosin ID heavy chain (1109 aa).

Residues 7–687 (HGVDDMVMLS…TVFNLEELRE (681 aa)) form the Myosin motor domain. 101 to 108 (GESGAGKT) is a binding site for ATP. The actin-binding stretch occupies residues 564–586 (IGALVKALSACTPHYIRCIKPNG). Positions 725–919 (KERRRLSIER…VSTPSDGLPA (195 aa)) constitute a TH1 domain. One can recognise an SH3 domain in the interval 958–1017 (NVKPSAKALYDFDAESSMELSFKEGDILTVLDQSSGDWWDAELKGRRGKVPSNYLQLIKN). The tract at residues 1017–1109 (NAAPPRAGGP…APRGGMAPRV (93 aa)) is disordered. Low complexity predominate over residues 1030–1043 (TGNRAPTTTTTSGG).

It belongs to the TRAFAC class myosin-kinesin ATPase superfamily. Myosin family. In terms of assembly, myosin I heavy chain is single-headed. Dimer of a heavy and a light chain. Inability to self-assemble into filaments.

The protein resides in the cell projection. Its subcellular location is the pseudopodium. It is found in the cytoplasm. The protein localises to the cell cortex. Myosin is a protein that binds to actin and has ATPase activity that is activated by actin. Myosin id may have a role in chemotaxis and aggregation; it could serve to stabilize and even retract cortical structures, such as pseudopods and lamellopods. Involved in the process of phagocytosis. In Dictyostelium discoideum (Social amoeba), this protein is Myosin ID heavy chain (myoD).